Reading from the N-terminus, the 169-residue chain is Peptide deformylase 1 (169 aa).

Fe cation contacts are provided by Cys-92 and His-134. The active site involves Glu-135. His-138 contacts Fe cation.

Belongs to the polypeptide deformylase family. Fe(2+) is required as a cofactor.

It carries out the reaction N-terminal N-formyl-L-methionyl-[peptide] + H2O = N-terminal L-methionyl-[peptide] + formate. Functionally, removes the formyl group from the N-terminal Met of newly synthesized proteins. Requires at least a dipeptide for an efficient rate of reaction. N-terminal L-methionine is a prerequisite for activity but the enzyme has broad specificity at other positions. This is Peptide deformylase 1 from Ralstonia nicotianae (strain ATCC BAA-1114 / GMI1000) (Ralstonia solanacearum).